We begin with the raw amino-acid sequence, 141 residues long: Hemoglobin subunit alpha (141 aa).

Residues 1–141 enclose the Globin domain; sequence VLSSADKANI…VSTVLTSKYR (141 aa). Serine 3 is subject to Phosphoserine. 2 positions are modified to N6-succinyllysine: lysine 7 and lysine 11. An N6-acetyllysine; alternate modification is found at lysine 16. Lysine 16 carries the N6-succinyllysine; alternate modification. Tyrosine 24 carries the phosphotyrosine modification. Position 40 is an N6-succinyllysine (lysine 40). Residue serine 49 is modified to Phosphoserine. Residue histidine 58 coordinates O2. A heme b-binding site is contributed by histidine 87. Serine 102 carries the phosphoserine modification. Threonine 108 is subject to Phosphothreonine. Phosphoserine is present on serine 131. Threonine 134 and threonine 137 each carry phosphothreonine. Position 138 is a phosphoserine (serine 138).

Belongs to the globin family. Heterotetramer of two alpha chains and two beta chains. As to expression, red blood cells.

Involved in oxygen transport from the lung to the various peripheral tissues. Its function is as follows. Hemopressin acts as an antagonist peptide of the cannabinoid receptor CNR1. Hemopressin-binding efficiently blocks cannabinoid receptor CNR1 and subsequent signaling. This chain is Hemoglobin subunit alpha (HBA), found in Crocuta crocuta (Spotted hyena).